The following is a 334-amino-acid chain: Transaldolase (334 aa).

S2 is subject to N-acetylserine. K143 serves as the catalytic Schiff-base intermediate with substrate.

Belongs to the transaldolase family. Type 1 subfamily. In terms of assembly, homodimer.

The enzyme catalyses D-sedoheptulose 7-phosphate + D-glyceraldehyde 3-phosphate = D-erythrose 4-phosphate + beta-D-fructose 6-phosphate. The protein operates within carbohydrate degradation; pentose phosphate pathway; D-glyceraldehyde 3-phosphate and beta-D-fructose 6-phosphate from D-ribose 5-phosphate and D-xylulose 5-phosphate (non-oxidative stage): step 2/3. Functionally, transaldolase is important for the balance of metabolites in the pentose-phosphate pathway. The sequence is that of Transaldolase (TAL1) from Kluyveromyces lactis (strain ATCC 8585 / CBS 2359 / DSM 70799 / NBRC 1267 / NRRL Y-1140 / WM37) (Yeast).